The primary structure comprises 168 residues: Bifunctional protein PyrR (168 aa).

Substrate-binding positions include 36–37, arginine 77, 94–102, and valine 151; these read TG and DDVLMSGRT. A PRPP-binding motif is present at residues 90–102; that stretch reads LVLIDDVLMSGRT.

The protein belongs to the purine/pyrimidine phosphoribosyltransferase family. PyrR subfamily.

It catalyses the reaction UMP + diphosphate = 5-phospho-alpha-D-ribose 1-diphosphate + uracil. Its function is as follows. Regulates the transcription of the pyrimidine nucleotide (pyr) operon in response to exogenous pyrimidines. Also displays a weak uracil phosphoribosyltransferase activity which is not physiologically significant. This Pseudomonas fluorescens protein is Bifunctional protein PyrR.